A 707-amino-acid chain; its full sequence is Protein SGM1 (707 aa).

The segment covering 1–11 has biased composition (basic and acidic residues); sequence MSKKLSLEERL. Residues 1 to 52 are disordered; sequence MSKKLSLEERLSLATKKGRKKNKRSTSNLSSPSPVVLSNNEQESARTSIDDA. Position 2 is an N-acetylserine (Ser-2). Low complexity predominate over residues 27–40; the sequence is SNLSSPSPVVLSNN. The stretch at 122 to 473 forms a coiled coil; sequence VEELVKEISP…KPHQENSNEK (352 aa). Phosphoserine occurs at positions 151, 538, 549, 568, 571, 576, and 589. The stretch at 594–706 forms a coiled coil; it reads SAHLVNKLST…QQMVEMQGKM (113 aa).

It belongs to the SGM1 family. In terms of assembly, interacts with YPT6.

It is found in the golgi apparatus. Required for normal growth rate on galactose and mannose. The polypeptide is Protein SGM1 (SGM1) (Saccharomyces cerevisiae (strain ATCC 204508 / S288c) (Baker's yeast)).